The chain runs to 99 residues: Late cornified envelope protein 4A (99 aa).

The interval 78-99 (CYGSGSGQQSGGSGCCSGGGCC) is disordered. The segment covering 81-99 (SGSGQQSGGSGCCSGGGCC) has biased composition (gly residues).

The protein belongs to the LCE family. In terms of assembly, interacts with CYSRT1; the interaction is direct. Skin-specific. Expression was readily detected in adult trunk skin, adult arm skin, fetal skin, penal skin, vulva, esophagus and tongue. Not expressed in the cervix, rectum, lung, colon, or placenta.

Functionally, precursors of the cornified envelope of the stratum corneum. The polypeptide is Late cornified envelope protein 4A (LCE4A) (Homo sapiens (Human)).